A 145-amino-acid chain; its full sequence is Major pollen allergen Ole e 1 (145 aa).

Cystine bridges form between Cys-19–Cys-90, Cys-22–Cys-131, and Cys-43–Cys-78. A glycan (N-linked (GlcNAc...) (complex) asparagine; alternate) is linked at Asn-111. N-linked (GlcNAc...) (high mannose) asparagine; alternate glycosylation is present at Asn-111.

It belongs to the Ole e I family. Post-translationally, N-glycosylated; contains high mannose (Man(7)-GlcNAc) and partially fucosylated complex glycans (GlcNAc-Man(3)-Xyl-GlcNAc). Complex glycans may contribute to the antigenicity. Exists both in a glycosylated and in a non-glycosylated form. Ole e 1 and Ole e 1.0103 are the only non-glycosylated isoallergens. A second potential glycosylation site exists at position 50 in cv. Bella de Espana and cv. Hojiblanca. As to expression, expressed in tapetum and pollen grains. Not detected in petals, roots or leaves.

It is found in the endoplasmic reticulum. Its subcellular location is the secreted. In terms of biological role, may be involved in recognition between pollen-stigma and pollen tube-style cells. This chain is Major pollen allergen Ole e 1, found in Olea europaea (Common olive).